We begin with the raw amino-acid sequence, 667 residues long: UvrABC system protein B (667 aa).

A Helicase ATP-binding domain is found at 31-414 (KNFEAGAKAQ…EAEQTDIQVD (384 aa)). 44 to 51 (GATGTGKT) serves as a coordination point for ATP. The Beta-hairpin signature appears at 97–120 (YYDYYQPEAYVPSSDTYIEKDSSI). The 163-residue stretch at 435 to 597 (QIDDLVGEIN…ITPKTIIKPI (163 aa)) folds into the Helicase C-terminal domain. The UVR domain occupies 630 to 665 (LEMVERLSEQMRLAAKKLDFEQAATLRDTILELKSE).

This sequence belongs to the UvrB family. In terms of assembly, forms a heterotetramer with UvrA during the search for lesions. Interacts with UvrC in an incision complex.

It is found in the cytoplasm. Functionally, the UvrABC repair system catalyzes the recognition and processing of DNA lesions. A damage recognition complex composed of 2 UvrA and 2 UvrB subunits scans DNA for abnormalities. Upon binding of the UvrA(2)B(2) complex to a putative damaged site, the DNA wraps around one UvrB monomer. DNA wrap is dependent on ATP binding by UvrB and probably causes local melting of the DNA helix, facilitating insertion of UvrB beta-hairpin between the DNA strands. Then UvrB probes one DNA strand for the presence of a lesion. If a lesion is found the UvrA subunits dissociate and the UvrB-DNA preincision complex is formed. This complex is subsequently bound by UvrC and the second UvrB is released. If no lesion is found, the DNA wraps around the other UvrB subunit that will check the other stand for damage. This Latilactobacillus sakei subsp. sakei (strain 23K) (Lactobacillus sakei subsp. sakei) protein is UvrABC system protein B.